Consider the following 428-residue polypeptide: Phosphoribosylamine--glycine ligase (428 aa).

The region spanning 107 to 313 is the ATP-grasp domain; the sequence is KQVMKTYNIP…LVNVIESLLD (207 aa). 133–194 lines the ATP pocket; sequence VEAEGVPIVI…EEYLEGEELS (62 aa). Mg(2+)-binding residues include Glu-283 and Asn-285.

The protein belongs to the GARS family. It depends on Mg(2+) as a cofactor. Requires Mn(2+) as cofactor.

It catalyses the reaction 5-phospho-beta-D-ribosylamine + glycine + ATP = N(1)-(5-phospho-beta-D-ribosyl)glycinamide + ADP + phosphate + H(+). It participates in purine metabolism; IMP biosynthesis via de novo pathway; N(1)-(5-phospho-D-ribosyl)glycinamide from 5-phospho-alpha-D-ribose 1-diphosphate: step 2/2. The polypeptide is Phosphoribosylamine--glycine ligase (Halalkalibacterium halodurans (strain ATCC BAA-125 / DSM 18197 / FERM 7344 / JCM 9153 / C-125) (Bacillus halodurans)).